Here is a 219-residue protein sequence, read N- to C-terminus: Ribose-5-phosphate isomerase A (219 aa).

Substrate-binding positions include 28–31, 81–84, and 94–97; these read SGST, DGAD, and KGGG. The Proton acceptor role is filled by Glu103. Position 121 (Lys121) interacts with substrate.

The protein belongs to the ribose 5-phosphate isomerase family. Homodimer.

It carries out the reaction aldehydo-D-ribose 5-phosphate = D-ribulose 5-phosphate. Its pathway is carbohydrate degradation; pentose phosphate pathway; D-ribose 5-phosphate from D-ribulose 5-phosphate (non-oxidative stage): step 1/1. Catalyzes the reversible conversion of ribose-5-phosphate to ribulose 5-phosphate. The polypeptide is Ribose-5-phosphate isomerase A (Actinobacillus succinogenes (strain ATCC 55618 / DSM 22257 / CCUG 43843 / 130Z)).